A 219-amino-acid chain; its full sequence is Ras-related protein Rab-3D (219 aa).

Residue A2 is modified to N-acetylalanine. A GDP-binding site is contributed by G29–S37. GTP-binding residues include S31, S32, V33, G34, K35, T36, S37, P49, and S53. T36 contacts Mg(2+). Positions P49–D58 match the Switch 1 motif. Positions 54 and 77 each coordinate Mg(2+). Position 80 (G80) interacts with GTP. The Switch 2 motif lies at G80–M96. T86 bears the Phosphothreonine; by LRRK2 mark. Residues N135, K136, D138, A166, and K167 each coordinate GTP. GDP contacts are provided by residues N135–D138 and S165–K167. Phosphoserine is present on S190. Residues S190–C219 form a disordered region. Positions P193–G203 are enriched in low complexity. Pro residues predominate over residues T209–C219. S-geranylgeranyl cysteine attachment occurs at residues C217 and C219. C219 bears the Cysteine methyl ester mark.

This sequence belongs to the small GTPase superfamily. Rab family. Interacts with RIMS1, RIMS2, RPH3A, RPH3AL and RAB3IP. The GTP-bound form interacts with REP15. Interacts with CHM and CHML; phosphorylation at Thr-86 disrupts these interactions. Interacts with MADD (via uDENN domain); the GTP-bound form is preferred for interaction. Mg(2+) is required as a cofactor. Post-translationally, phosphorylation of Thr-86 in the switch II region by LRRK2 prevents the association of RAB regulatory proteins, including CHM and CHML. In terms of tissue distribution, predominantly expressed in the adipocyte tissue, but is also expressed in several other organs including skin, spleen, heart and lung.

It localises to the cell membrane. It catalyses the reaction GTP + H2O = GDP + phosphate + H(+). Regulated by guanine nucleotide exchange factors (GEFs) which promote the exchange of bound GDP for free GTP. Regulated by GTPase activating proteins (GAPs) which increase the GTP hydrolysis activity. Inhibited by GDP dissociation inhibitors (GDIs) which prevent Rab-GDP dissociation. In terms of biological role, the small GTPases Rab are key regulators of intracellular membrane trafficking, from the formation of transport vesicles to their fusion with membranes. Rabs cycle between an inactive GDP-bound form and an active GTP-bound form that is able to recruit to membranes different sets of downstream effectors directly responsible for vesicle formation, movement, tethering and fusion. RAB3D may be involved in the insulin-induced exocytosis of GLUT4-containing vesicles in adipocytes. The polypeptide is Ras-related protein Rab-3D (Mus musculus (Mouse)).